The chain runs to 347 residues: Protein RecA (347 aa).

66-73 contacts ATP; the sequence is GPESSGKT.

This sequence belongs to the RecA family.

Its subcellular location is the cytoplasm. Functionally, can catalyze the hydrolysis of ATP in the presence of single-stranded DNA, the ATP-dependent uptake of single-stranded DNA by duplex DNA, and the ATP-dependent hybridization of homologous single-stranded DNAs. It interacts with LexA causing its activation and leading to its autocatalytic cleavage. The protein is Protein RecA of Burkholderia cepacia (Pseudomonas cepacia).